We begin with the raw amino-acid sequence, 343 residues long: uncharacterized protein (343 aa).

This is an uncharacterized protein from Acanthamoeba polyphaga mimivirus (APMV).